A 236-amino-acid chain; its full sequence is Large ribosomal subunit protein uL3 (236 aa).

Residues 139–149 show a composition bias toward low complexity; sequence SVSHRSHGSTG. The tract at residues 139-165 is disordered; sequence SVSHRSHGSTGQRQDPGKVFKGKKMAG. At glutamine 152 the chain carries N5-methylglutamine.

It belongs to the universal ribosomal protein uL3 family. As to quaternary structure, part of the 50S ribosomal subunit. Forms a cluster with proteins L14 and L19. In terms of processing, methylated by PrmB.

One of the primary rRNA binding proteins, it binds directly near the 3'-end of the 23S rRNA, where it nucleates assembly of the 50S subunit. This chain is Large ribosomal subunit protein uL3, found in Pelagibacter ubique (strain HTCC1062).